Here is an 88-residue protein sequence, read N- to C-terminus: Small ribosomal subunit protein bS16c (88 aa).

This sequence belongs to the bacterial ribosomal protein bS16 family.

It is found in the plastid. The protein localises to the chloroplast. The chain is Small ribosomal subunit protein bS16c from Oenothera elata subsp. hookeri (Hooker's evening primrose).